We begin with the raw amino-acid sequence, 229 residues long: Potassium/proton antiporter CemA (229 aa).

3 helical membrane-spanning segments follow: residues 7–27 (LNPL…SLSF), 106–126 (IILH…YSIL), and 189–209 (IISG…KYWI).

It belongs to the CemA family.

It localises to the plastid. The protein resides in the chloroplast inner membrane. The catalysed reaction is K(+)(in) + H(+)(out) = K(+)(out) + H(+)(in). In terms of biological role, contributes to K(+)/H(+) antiport activity by supporting proton efflux to control proton extrusion and homeostasis in chloroplasts in a light-dependent manner to modulate photosynthesis. Prevents excessive induction of non-photochemical quenching (NPQ) under continuous-light conditions. Indirectly promotes efficient inorganic carbon uptake into chloroplasts. In Nymphaea alba (White water-lily), this protein is Potassium/proton antiporter CemA.